An 82-amino-acid polypeptide reads, in one-letter code: Delta-actitoxin-Aeq2b 2 (82 aa).

An N-terminal signal peptide occupies residues 1 to 19; the sequence is MNRLMILVFAAVFLALASA. The propeptide occupies 20–26; sequence DEDVDIA. Cystine bridges form between cysteine 32–cysteine 79, cysteine 34–cysteine 69, and cysteine 62–cysteine 80.

The protein belongs to the sea anemone sodium channel inhibitory toxin family. Type I subfamily.

It is found in the secreted. It localises to the nematocyst. Binds specifically to voltage-gated sodium channels (Nav), thereby delaying their inactivation during signal transduction. Causes death to crabs. This chain is Delta-actitoxin-Aeq2b 2, found in Actinia equina (Beadlet anemone).